The sequence spans 137 residues: Protein cornichon homolog 4 (137 aa).

A run of 3 helical transmembrane segments spans residues 8-28 (LISF…LVCL), 53-73 (FIVQ…FMTL), and 113-133 (LAYI…SALD).

Belongs to the cornichon family.

It localises to the membrane. The sequence is that of Protein cornichon homolog 4 from Arabidopsis thaliana (Mouse-ear cress).